Reading from the N-terminus, the 408-residue chain is Imidazolonepropionase (408 aa).

Fe(3+) is bound by residues His73 and His75. Residues His73 and His75 each coordinate Zn(2+). Arg82, Tyr145, and His178 together coordinate 4-imidazolone-5-propanoate. Tyr145 is a binding site for N-formimidoyl-L-glutamate. Residue His243 participates in Fe(3+) binding. Residue His243 participates in Zn(2+) binding. Gln246 provides a ligand contact to 4-imidazolone-5-propanoate. Asp318 contacts Fe(3+). Asp318 is a binding site for Zn(2+). The N-formimidoyl-L-glutamate site is built by Asn320 and Gly322. Ser323 contributes to the 4-imidazolone-5-propanoate binding site.

Belongs to the metallo-dependent hydrolases superfamily. HutI family. Requires Zn(2+) as cofactor. The cofactor is Fe(3+).

The protein localises to the cytoplasm. The catalysed reaction is 4-imidazolone-5-propanoate + H2O = N-formimidoyl-L-glutamate. Its pathway is amino-acid degradation; L-histidine degradation into L-glutamate; N-formimidoyl-L-glutamate from L-histidine: step 3/3. In terms of biological role, catalyzes the hydrolytic cleavage of the carbon-nitrogen bond in imidazolone-5-propanoate to yield N-formimidoyl-L-glutamate. It is the third step in the universal histidine degradation pathway. The polypeptide is Imidazolonepropionase (Shewanella sp. (strain W3-18-1)).